Reading from the N-terminus, the 252-residue chain is Small ribosomal subunit protein uS3 (252 aa).

Residues 38-106 (IRKYIHARLS…EVQINIFEIK (69 aa)) form the KH type-2 domain. Residues 214 to 252 (PLAGMDKKQSGTGGGKGGDAPRGKSNFNKGGKPDARKRK) are disordered. The segment covering 224 to 233 (GTGGGKGGDA) has biased composition (gly residues).

The protein belongs to the universal ribosomal protein uS3 family. As to quaternary structure, part of the 30S ribosomal subunit. Forms a tight complex with proteins S10 and S14.

Its function is as follows. Binds the lower part of the 30S subunit head. Binds mRNA in the 70S ribosome, positioning it for translation. The polypeptide is Small ribosomal subunit protein uS3 (Flavobacterium johnsoniae (strain ATCC 17061 / DSM 2064 / JCM 8514 / BCRC 14874 / CCUG 350202 / NBRC 14942 / NCIMB 11054 / UW101) (Cytophaga johnsonae)).